A 502-amino-acid chain; its full sequence is Protein IWS1 homolog 1 (502 aa).

Positions 1-12 are enriched in basic and acidic residues; sequence MGFEDDPYRDVD. Disordered stretches follow at residues 1-61 and 87-208; these read MGFE…DNDK and DEDV…DEDE. Acidic residues-rich tracts occupy residues 13–22, 34–49, and 87–97; these read GEPIVDFDDF, QDFD…DWDG, and DEDVDDAEFDE. Composition is skewed to basic and acidic residues over residues 138-151 and 181-194; these read NRGE…DEMW and PSER…DRSP. Tyr-185 is subject to Phosphotyrosine. A TFIIS N-terminal domain is found at 287–370; it reads TLLKNWLEPL…DKWSRPIFNK (84 aa). The disordered stretch occupies residues 385–434; the sequence is VPYRRPPVKKPSNKATMESRDGDFDLEIRERKTGLTSGQSSRGDRQMTMR. Basic and acidic residues predominate over residues 401–417; sequence MESRDGDFDLEIRERKT.

This sequence belongs to the IWS1 family. Interacts with BZR2/BES1 and SPT6 (via N-terminus). Interacts with ASHH2/SDG8.

It is found in the nucleus. Its function is as follows. Transcription factor involved in RNA polymerase II (RNAPII) transcription regulation. Involved in transcription elongation. May function at post-recruitment and elongation steps of transcription. May be recruited by BZR2/BES1 to target genes and promote their expression during transcription elongation process. Required for brassinosteroid (BR)-induced gene expression. Required the for regulation of numerous nitrogen-responsive genes in roots. Acts in roots to repress NRT2.1 transcription in response to high nitrogen supply. This repression is associated with an IWS1-dependent increase of trimethylation on 'Lys-27' H3K27me3 at the NRT2.1 locus. The sequence is that of Protein IWS1 homolog 1 from Arabidopsis thaliana (Mouse-ear cress).